We begin with the raw amino-acid sequence, 828 residues long: Fibroblast growth factor receptor 4 (828 aa).

The signal sequence occupies residues methionine 1 to cysteine 31. Residues arginine 32 to aspartate 392 lie on the Extracellular side of the membrane. The Ig-like C2-type 1 domain occupies proline 33–serine 127. Cysteine 67 and cysteine 112 are disulfide-bonded. Asparagine 70 carries an N-linked (GlcNAc...) asparagine glycan. The segment at leucine 132–alanine 156 is disordered. The span at glycine 135–glutamate 147 shows a compositional bias: acidic residues. Ig-like C2-type domains follow at residues proline 169–threonine 259 and proline 272–threonine 372. A disulfide bridge links cysteine 194 with cysteine 247. Residues asparagine 244, asparagine 281, asparagine 313, and asparagine 345 are each glycosylated (N-linked (GlcNAc...) asparagine). An intrachain disulfide couples cysteine 294 to cysteine 356. The chain crosses the membrane as a helical span at residues isoleucine 393–cysteine 413. Residues arginine 414–threonine 828 lie on the Cytoplasmic side of the membrane. Residues leucine 490–leucine 777 form the Protein kinase domain. Residues leucine 496–valine 504 and lysine 526 contribute to the ATP site. Catalysis depends on aspartate 635, which acts as the Proton acceptor. 3 positions are modified to phosphotyrosine; by autocatalysis: tyrosine 665, tyrosine 666, and tyrosine 776.

The protein belongs to the protein kinase superfamily. Tyr protein kinase family. Fibroblast growth factor receptor subfamily. Post-translationally, ubiquitinated. Subject to proteasomal degradation when not fully glycosylated. In terms of processing, autophosphorylated. Binding of FGF family members together with heparan sulfate proteoglycan or heparin promotes receptor dimerization and autophosphorylation on tyrosine residues. Autophosphorylation occurs in trans between the two FGFR molecules present in the dimer.

It is found in the cell membrane. The protein resides in the endosome. The protein localises to the endoplasmic reticulum. The catalysed reaction is L-tyrosyl-[protein] + ATP = O-phospho-L-tyrosyl-[protein] + ADP + H(+). Its activity is regulated as follows. Present in an inactive conformation in the absence of bound ligand. Ligand binding leads to dimerization and activation by autophosphorylation on tyrosine residues. In terms of biological role, tyrosine-protein kinase that acts as a cell-surface receptor for fibroblast growth factors and plays a role in the regulation of cell proliferation, differentiation and migration, and in regulation of lipid metabolism, bile acid biosynthesis, glucose uptake, vitamin D metabolism and phosphate homeostasis. Required for normal down-regulation of the expression of CYP7A1, the rate-limiting enzyme in bile acid synthesis, in response to FGF19. Phosphorylates PLCG1 and FRS2. Ligand binding leads to the activation of several signaling cascades. Activation of PLCG1 leads to the production of the cellular signaling molecules diacylglycerol and inositol 1,4,5-trisphosphate. Phosphorylation of FRS2 triggers recruitment of GRB2, GAB1, PIK3R1 and SOS1, and mediates activation of RAS, MAPK1/ERK2, MAPK3/ERK1 and the MAP kinase signaling pathway, as well as of the AKT1 signaling pathway. The sequence is that of Fibroblast growth factor receptor 4 (fgfr4) from Xenopus laevis (African clawed frog).